Consider the following 179-residue polypeptide: Ribosomal-protein-serine acetyltransferase (179 aa).

An N-acetyltransferase domain is found at 11–172; that stretch reads LELHAVAENH…NDAYDDVNLY (162 aa).

This sequence belongs to the acetyltransferase family. RimL subfamily.

Its subcellular location is the cytoplasm. The catalysed reaction is N-terminal L-seryl-[ribosomal protein bL12] + acetyl-CoA = N-terminal N(alpha)-acetyl-L-seryl-[ribosomal protein bL12] + CoA + H(+). This enzyme acetylates the N-terminal serine of ribosomal protein bL12, converting it into the acetylated form of bL12 known as bL7. This chain is Ribosomal-protein-serine acetyltransferase, found in Escherichia coli (strain K12).